A 107-amino-acid polypeptide reads, in one-letter code: uncharacterized protein (107 aa).

The chain crosses the membrane as a helical span at residues 13-33 (VLIVTFLSSFIFIVWLPVALV).

The protein localises to the membrane. This is an uncharacterized protein from Saccharomyces cerevisiae (strain ATCC 204508 / S288c) (Baker's yeast).